We begin with the raw amino-acid sequence, 326 residues long: Vitamin B12 import system permease protein BtuC (326 aa).

The next 9 helical transmembrane spans lie at 15-35 (WLLCLSVLMLLALLLSLCAGE), 61-81 (LAVLLVGAALAISGAVMQALF), 88-108 (PGLLGVSNGAGVGLIAAVLLG), 112-132 (LPNWALGLCAIAGALIITLIL), 146-166 (LLAGVALGIICSALMTWAIYF), 184-204 (GGVDWRQSWLMLALIPVLLWI), 240-260 (GWMVGVSVALAGAIGFIGLVI), 274-294 (VLLPGCALAGASAVLLADIVA), and 302-322 (ELPIGVVTATLGAPVFIWLLL).

The protein belongs to the binding-protein-dependent transport system permease family. FecCD subfamily. As to quaternary structure, the complex is composed of two ATP-binding proteins (BtuD), two transmembrane proteins (BtuC) and a solute-binding protein (BtuF).

The protein localises to the cell inner membrane. In terms of biological role, part of the ABC transporter complex BtuCDF involved in vitamin B12 import. Involved in the translocation of the substrate across the membrane. This chain is Vitamin B12 import system permease protein BtuC, found in Shigella sonnei (strain Ss046).